A 144-amino-acid chain; its full sequence is Nucleoside diphosphate kinase (144 aa).

Lys-11, Phe-59, Arg-87, Thr-93, Arg-104, and Asn-114 together coordinate ATP. His-117 (pros-phosphohistidine intermediate) is an active-site residue.

This sequence belongs to the NDK family. Homotetramer. The cofactor is Mg(2+).

The protein resides in the cytoplasm. It carries out the reaction a 2'-deoxyribonucleoside 5'-diphosphate + ATP = a 2'-deoxyribonucleoside 5'-triphosphate + ADP. The enzyme catalyses a ribonucleoside 5'-diphosphate + ATP = a ribonucleoside 5'-triphosphate + ADP. Its function is as follows. Major role in the synthesis of nucleoside triphosphates other than ATP. The ATP gamma phosphate is transferred to the NDP beta phosphate via a ping-pong mechanism, using a phosphorylated active-site intermediate. This chain is Nucleoside diphosphate kinase, found in Sorangium cellulosum (strain So ce56) (Polyangium cellulosum (strain So ce56)).